Reading from the N-terminus, the 298-residue chain is Fe(II)/2-oxoglutarate-dependent dioxygenase nvfF (298 aa).

The Fe cation site is built by histidine 137, aspartate 139, and histidine 212.

Belongs to the PhyH family. In terms of assembly, homodimer. The cofactor is Fe cation.

It catalyses the reaction fumigatonoid C + 2-oxoglutarate + O2 = novofumigatonin + succinate + CO2 + H2O. Its pathway is secondary metabolite biosynthesis; terpenoid biosynthesis. Functionally, fe(II)/2-oxoglutarate-dependent dioxygenase; part of the gene cluster that mediates the biosynthesis of novofumigatonin, a heavily oxygenated meroterpenoid containing a unique orthoester moiety. The first step of the pathway is the synthesis of 3,5-dimethylorsellinic acid (DMOA) by the polyketide synthase nvfA via condensation of one acetyl-CoA starter unit with 3 malonyl-CoA units and 2 methylations. DMOA is then converted to farnesyl-DMOA by the farnesyltransferase nvfB. Epoxydation by FAD-dependent monooxygenase nvfK, followed by a protonation-initiated cyclization catalyzed by the terpene cyclase nvfL leads to the production of asnavolin H. The short chain dehydrogenase nvfC then as a 3-OH dehydrogenase of asnovolin H to yield chemesin D. There are two branches to synthesize asnovolin A from chemesin D. In one branch, chemesin D undergoes Baeyer-Villiger oxidation by nvfH, methylation by nvfJ, and enoyl reduction by the nvfM D enoylreductase that reduces the double bond between C-5'and C-6', to form respectively asnovolin I, asnovolin K, and asnovolin A. In the other branch, the methylation precedes the Baeyer-Villiger oxidation and the enoyl reduction to yield asnovolin A via the asnovolin J intermediate. Asnovolin A is further converted to fumigatonoid A by the Fe(II)/2-oxoglutarate-dependent dioxygenase nvfI that catalyzes an endoperoxidation reaction. The alpha/beta hydrolase nvfD then acts as an epimerase that converts fumigatonoid A to its C-5' epimer, which then undergoes spontaneous or nvfD-catalyzed lactonization. The following step utilizes the ketoreductase nvfG to produce fumigatonoid B. The dioxygenase nvfE further converts fumigatonoid B into fumigatonoid C. Finally the Fe(II)/2-oxoglutarate-dependent dioxygenase nvfF catalyzes two rounds of oxidation to transform fumigatonoid C into the end product, novofumigatonin A. The protein is Fe(II)/2-oxoglutarate-dependent dioxygenase nvfF of Aspergillus novofumigatus (strain IBT 16806).